A 123-amino-acid polypeptide reads, in one-letter code: Probable cyclase otaY (123 aa).

Belongs to the aurE cyclase family.

Its pathway is mycotoxin biosynthesis. Probable cyclase; part of the gene cluster that mediates the biosynthesis of ochratoxin A (OTA), a mycotoxin composed of a chlorinated type I polyketide dihydroisocoumarin moiety linked to L-phenylalanine, and demonstrated to have nephrotoxic, immunotoxic, genotoxic, neurotoxic, and teratogenic properties. OtaY is probably involved in the polyketide cyclization. The pathway begins with the highly reducing polyketide synthase otaA that catalyzes the formation of the isocoumarin group during the initial stages of biosynthesis, starting from one acetate and 4 malonate units, to originate the characteristic pentaketide skeleton 7-methylmellein (7-MM) of the OTA molecule. The newly identified cyclase otaY might be involved in the polyketide cyclization reaction during the initial steps of the OTA biosynthesis. 7-MM is then oxidized into 7-carboxymellein (also called ochratoxin beta) by the cytochrome P450 monooxygenase otaC. The NRPS encoded by the otaB gene is involved in the linking of phenylalanine to the dihydroisocoumarin ring. The reaction catalyzed by NRPS results in the production of ochratoxin B (OTB), which is the non-chlorinated analog of OTA and which subsequently serves as the substrate of the halogenase otaD for chlorination activity to form the final molecular structure of OTA, containing a chlorine atom in the C-5 position of the molecule. This chain is Probable cyclase otaY, found in Aspergillus carbonarius (strain ITEM 5010).